A 510-amino-acid polypeptide reads, in one-letter code: Putative glycerol-3-phosphate transporter 3 (510 aa).

12 helical membrane passes run Leu31–Phe51, Ala91–Ala111, Phe123–Trp143, Leu158–Phe178, Val185–Ala205, Phe217–Val237, Val279–Phe299, Gly331–Phe351, Leu355–Leu375, Ile378–Val398, Thr436–Trp456, and Val459–Ile479.

It belongs to the major facilitator superfamily. Organophosphate:Pi antiporter (OPA) (TC 2.A.1.4) family.

It is found in the membrane. The sequence is that of Putative glycerol-3-phosphate transporter 3 from Arabidopsis thaliana (Mouse-ear cress).